We begin with the raw amino-acid sequence, 604 residues long: Elongation factor 4 (604 aa).

Residues 9–191 (DAIRNFCIIA…AVISRVPAPA (183 aa)) enclose the tr-type G domain. GTP contacts are provided by residues 21–26 (DHGKST) and 138–141 (NKID).

It belongs to the TRAFAC class translation factor GTPase superfamily. Classic translation factor GTPase family. LepA subfamily.

Its subcellular location is the cell inner membrane. The catalysed reaction is GTP + H2O = GDP + phosphate + H(+). Functionally, required for accurate and efficient protein synthesis under certain stress conditions. May act as a fidelity factor of the translation reaction, by catalyzing a one-codon backward translocation of tRNAs on improperly translocated ribosomes. Back-translocation proceeds from a post-translocation (POST) complex to a pre-translocation (PRE) complex, thus giving elongation factor G a second chance to translocate the tRNAs correctly. Binds to ribosomes in a GTP-dependent manner. The sequence is that of Elongation factor 4 from Prosthecochloris aestuarii (strain DSM 271 / SK 413).